We begin with the raw amino-acid sequence, 465 residues long: Probable protein phosphatase 2C 71 (465 aa).

Disordered stretches follow at residues R14–A47, R68–T119, and S133–E191. Residues L18–P30 are compositionally biased toward pro residues. Composition is skewed to low complexity over residues A84–E106 and S133–G143. The 239-residue stretch at A222–V460 folds into the PPM-type phosphatase domain. 4 residues coordinate Mn(2+): D254, G255, D384, and D451.

Belongs to the PP2C family. Mg(2+) is required as a cofactor. Mn(2+) serves as cofactor.

The enzyme catalyses O-phospho-L-seryl-[protein] + H2O = L-seryl-[protein] + phosphate. The catalysed reaction is O-phospho-L-threonyl-[protein] + H2O = L-threonyl-[protein] + phosphate. The chain is Probable protein phosphatase 2C 71 from Oryza sativa subsp. japonica (Rice).